The chain runs to 572 residues: Potassium-transporting ATPase potassium-binding subunit (572 aa).

A run of 11 helical transmembrane segments spans residues 5–25 (LAAG…YVPL), 71–91 (VGYT…LYVL), 97–117 (VLPL…NTAV), 142–162 (GLAV…VALI), 188–208 (ILLP…TIQS), 258–278 (PTPL…VCLT), 292–312 (LTVL…VTWA), 387–407 (GLYG…LLVG), 422–442 (ITMA…GTGI), 500–520 (LGMA…ALAG), and 548–568 (GTVL…GPIA).

This sequence belongs to the KdpA family. In terms of assembly, the system is composed of three essential subunits: KdpA, KdpB and KdpC.

It localises to the cell membrane. Functionally, part of the high-affinity ATP-driven potassium transport (or Kdp) system, which catalyzes the hydrolysis of ATP coupled with the electrogenic transport of potassium into the cytoplasm. This subunit binds the extracellular potassium ions and delivers the ions to the membrane domain of KdpB through an intramembrane tunnel. This is Potassium-transporting ATPase potassium-binding subunit from Mycobacteroides abscessus (strain ATCC 19977 / DSM 44196 / CCUG 20993 / CIP 104536 / JCM 13569 / NCTC 13031 / TMC 1543 / L948) (Mycobacterium abscessus).